A 689-amino-acid polypeptide reads, in one-letter code: DNA ligase (689 aa).

NAD(+)-binding positions include 35–39 (DEVYD), 84–85 (SL), and Glu-122. The active-site N6-AMP-lysine intermediate is Lys-124. NAD(+)-binding residues include Arg-145, Glu-182, Lys-308, and Lys-332. Residues Cys-426, Cys-429, Cys-444, and Cys-449 each contribute to the Zn(2+) site. The BRCT domain occupies 612–689 (TTEKSLNGKR…NETELIQMCR (78 aa)).

The protein belongs to the NAD-dependent DNA ligase family. LigA subfamily. The cofactor is Mg(2+). It depends on Mn(2+) as a cofactor.

It carries out the reaction NAD(+) + (deoxyribonucleotide)n-3'-hydroxyl + 5'-phospho-(deoxyribonucleotide)m = (deoxyribonucleotide)n+m + AMP + beta-nicotinamide D-nucleotide.. DNA ligase that catalyzes the formation of phosphodiester linkages between 5'-phosphoryl and 3'-hydroxyl groups in double-stranded DNA using NAD as a coenzyme and as the energy source for the reaction. It is essential for DNA replication and repair of damaged DNA. The chain is DNA ligase from Thermosynechococcus vestitus (strain NIES-2133 / IAM M-273 / BP-1).